The sequence spans 306 residues: Pyridoxal 5'-phosphate synthase subunit PdxS (306 aa).

Asp-36 is a binding site for D-ribose 5-phosphate. Residue Lys-93 is the Schiff-base intermediate with D-ribose 5-phosphate of the active site. D-ribose 5-phosphate is bound at residue Gly-165. A D-glyceraldehyde 3-phosphate-binding site is contributed by Arg-177. Residues Gly-226 and 247 to 248 (GS) contribute to the D-ribose 5-phosphate site.

Belongs to the PdxS/SNZ family. In terms of assembly, in the presence of PdxT, forms a dodecamer of heterodimers.

The enzyme catalyses aldehydo-D-ribose 5-phosphate + D-glyceraldehyde 3-phosphate + L-glutamine = pyridoxal 5'-phosphate + L-glutamate + phosphate + 3 H2O + H(+). Its pathway is cofactor biosynthesis; pyridoxal 5'-phosphate biosynthesis. Catalyzes the formation of pyridoxal 5'-phosphate from ribose 5-phosphate (RBP), glyceraldehyde 3-phosphate (G3P) and ammonia. The ammonia is provided by the PdxT subunit. Can also use ribulose 5-phosphate and dihydroxyacetone phosphate as substrates, resulting from enzyme-catalyzed isomerization of RBP and G3P, respectively. The protein is Pyridoxal 5'-phosphate synthase subunit PdxS of Corynebacterium urealyticum (strain ATCC 43042 / DSM 7109).